The following is a 297-amino-acid chain: Occlusion-derived virus envelope protein E27 (297 aa).

The protein belongs to the baculoviridae E27 family. As to quaternary structure, interacts with host mus209/PCNA, cdc2 and cdk6.

Its subcellular location is the virion membrane. Its function is as follows. Acts as a cyclin-like protein and plays a role in the modulation of host cell cycle. May promote G2/S arrest by interacting with host mus209/PCNA, cdc2 and cdk6. The cell cycle arrest is characterized by an intact nuclear envelope, concomitant with sustained activity of host cdc2. However, viral DNA replication still occurs in the arrested cells. The chain is Occlusion-derived virus envelope protein E27 from Orgyia pseudotsugata multicapsid polyhedrosis virus (OpMNPV).